A 223-amino-acid polypeptide reads, in one-letter code: Retbindin (223 aa).

A signal peptide spans 1 to 30 (MANRGHTQPRALAWALGLTLVWILLGACGG). 4 disulfide bridges follow: Cys-73-Cys-143, Cys-80-Cys-120, Cys-113-Cys-157, and Cys-126-Cys-139.

This sequence belongs to the folate receptor family. In terms of processing, not N-glycosylated.

It localises to the secreted. The protein localises to the extracellular space. It is found in the extracellular matrix. The protein resides in the interphotoreceptor matrix. Its subcellular location is the cell membrane. Functionally, riboflavin-binding protein which might have a role in retinal flavin transport. The polypeptide is Retbindin (RTBDN) (Canis lupus familiaris (Dog)).